A 53-amino-acid chain; its full sequence is Tryptophan RNA-binding attenuator protein inhibitory protein (53 aa).

CXXCXGXG motif repeat units lie at residues 12–19 (CPKCERAG) and 26–33 (CPACSGKG).

In terms of assembly, homopentamer or homohexamer.

The protein localises to the cytoplasm. By forming a complex with tryptophan-activated TRAP, and masking its RNA binding site, it inhibits TRAP's RNA binding ability, thereby abolishing TRAP regulation of gene expression, leading to antitermination and increased trp operon expression. AT acts by competing with messenger RNA for the RNA binding domain of TRAP. The chain is Tryptophan RNA-binding attenuator protein inhibitory protein (rtpA) from Bacillus subtilis (strain 168).